The following is a 226-amino-acid chain: 7-cyano-7-deazaguanine synthase (226 aa).

Phe-10–Ala-20 lines the ATP pocket. Positions 190, 205, 208, and 211 each coordinate Zn(2+).

It belongs to the QueC family. It depends on Zn(2+) as a cofactor.

It catalyses the reaction 7-carboxy-7-deazaguanine + NH4(+) + ATP = 7-cyano-7-deazaguanine + ADP + phosphate + H2O + H(+). It participates in purine metabolism; 7-cyano-7-deazaguanine biosynthesis. Its function is as follows. Catalyzes the ATP-dependent conversion of 7-carboxy-7-deazaguanine (CDG) to 7-cyano-7-deazaguanine (preQ(0)). This is 7-cyano-7-deazaguanine synthase from Helicobacter pylori (strain Shi470).